The sequence spans 386 residues: Agamous-like MADS-box protein AGL103 (386 aa).

The 48-residue stretch at 29–76 (SSSRATSLIKRQQTVFKKAKELSILCDIDVCVICYGSNGELKTWPEER) folds into the MADS-box domain.

In terms of assembly, interacts with MEE14/CBP1.

It is found in the nucleus. Its function is as follows. Probable transcription factor that may function in the maintenance of the proper function of the central cell in pollen tube attraction. The sequence is that of Agamous-like MADS-box protein AGL103 from Arabidopsis thaliana (Mouse-ear cress).